Reading from the N-terminus, the 92-residue chain is Ribonuclease P protein component 1 (92 aa).

The protein belongs to the eukaryotic/archaeal RNase P protein component 1 family. As to quaternary structure, consists of a catalytic RNA component and at least 4-5 protein subunits.

The protein resides in the cytoplasm. It carries out the reaction Endonucleolytic cleavage of RNA, removing 5'-extranucleotides from tRNA precursor.. Functionally, part of ribonuclease P, a protein complex that generates mature tRNA molecules by cleaving their 5'-ends. In Desulfurococcus amylolyticus (strain DSM 18924 / JCM 16383 / VKM B-2413 / 1221n) (Desulfurococcus kamchatkensis), this protein is Ribonuclease P protein component 1.